A 611-amino-acid chain; its full sequence is Ankyrin repeat protein SKIP35 (611 aa).

ANK repeat units follow at residues 292–322, 323–353, 356–384, 385–414, 416–442, and 445–478; these read LFSN…EGGA, DNVN…RNSL, DVDL…NAIA, FLGP…DMEL, LALT…PPVL, and LSIE…DSTA.

Interacts with SKP1A/ASK1.

The protein is Ankyrin repeat protein SKIP35 (SKIP35) of Arabidopsis thaliana (Mouse-ear cress).